Consider the following 152-residue polypeptide: MTITELVLILFIAALLAFAIYDQFIMPRRNGPTLLAIPLLRRGRIDSVIFVGLIVILIYNNVTNHGAQITTWLLSALALMGFYIFWIRVPKIIFKQKGFFFANVWIEYSRIKAMNLSEDGVLVMQLEQRRLLIRVRNIDDLEKIYKLLVSTQ.

The next 3 membrane-spanning stretches (helical) occupy residues 6-26 (LVLI…QFIM), 45-65 (IDSV…VTNH), and 67-87 (AQIT…IFWI).

It belongs to the UPF0266 family.

It localises to the cell inner membrane. This Escherichia fergusonii (strain ATCC 35469 / DSM 13698 / CCUG 18766 / IAM 14443 / JCM 21226 / LMG 7866 / NBRC 102419 / NCTC 12128 / CDC 0568-73) protein is UPF0266 membrane protein YobD.